Reading from the N-terminus, the 423-residue chain is Adenylosuccinate synthetase (423 aa).

GTP contacts are provided by residues 12-18 and 40-42; these read GDEGKGK and GHT. The Proton acceptor role is filled by Asp-13. Mg(2+)-binding residues include Asp-13 and Gly-40. IMP-binding positions include 13–16, 38–41, Thr-129, Arg-143, Gln-221, Thr-236, and Arg-300; these read DEGK and NAGH. Catalysis depends on His-41, which acts as the Proton donor. Position 296-302 (296-302) interacts with substrate; sequence AVTGRER. GTP contacts are provided by residues Arg-302, 328–330, and 408–410; these read KSD and SVG.

The protein belongs to the adenylosuccinate synthetase family. As to quaternary structure, homodimer. Mg(2+) is required as a cofactor.

The protein localises to the cytoplasm. The catalysed reaction is IMP + L-aspartate + GTP = N(6)-(1,2-dicarboxyethyl)-AMP + GDP + phosphate + 2 H(+). It functions in the pathway purine metabolism; AMP biosynthesis via de novo pathway; AMP from IMP: step 1/2. Plays an important role in the de novo pathway of purine nucleotide biosynthesis. Catalyzes the first committed step in the biosynthesis of AMP from IMP. This Phocaeicola vulgatus (strain ATCC 8482 / DSM 1447 / JCM 5826 / CCUG 4940 / NBRC 14291 / NCTC 11154) (Bacteroides vulgatus) protein is Adenylosuccinate synthetase.